Reading from the N-terminus, the 271-residue chain is Urease accessory protein UreD (271 aa).

Belongs to the UreD family. As to quaternary structure, ureD, UreF and UreG form a complex that acts as a GTP-hydrolysis-dependent molecular chaperone, activating the urease apoprotein by helping to assemble the nickel containing metallocenter of UreC. The UreE protein probably delivers the nickel.

It localises to the cytoplasm. Functionally, required for maturation of urease via the functional incorporation of the urease nickel metallocenter. This Haemophilus influenzae (strain PittGG) protein is Urease accessory protein UreD.